Here is an 84-residue protein sequence, read N- to C-terminus: Dolichol phosphate-mannose biosynthesis regulatory protein (84 aa).

2 helical membrane passes run 11–31 (LGLV…VILL) and 49–69 (YAIA…GIFI).

The protein belongs to the DPM2 family. In terms of assembly, component of the dolichol-phosphate mannose (DPM) synthase complex composed of DPM1, DPM2 and DPM3; in the complex interacts directly with DPM3. Component of the glycosylphosphatidylinositol-N-acetylglucosaminyltransferase (GPI-GnT) complex composed at least by PIGA, PIGC, PIGH, PIGP, PIGQ, PIGY and DPM2. Interacts with PIGA, PIGC and PIGQ.

Its subcellular location is the endoplasmic reticulum membrane. Its pathway is protein modification; protein glycosylation. In terms of biological role, regulates the biosynthesis of dolichol phosphate-mannose. Regulatory subunit of the dolichol-phosphate mannose (DPM) synthase complex; essential for the ER localization and stable expression of DPM1. Part of the glycosylphosphatidylinositol-N-acetylglucosaminyltransferase (GPI-GnT) complex that catalyzes the transfer of N-acetylglucosamine from UDP-N-acetylglucosamine to phosphatidylinositol and participates in the first step of GPI biosynthesis. May act by regulating the GPI-GNT complex. This is Dolichol phosphate-mannose biosynthesis regulatory protein from Bos taurus (Bovine).